A 295-amino-acid chain; its full sequence is Light-independent protochlorophyllide reductase iron-sulfur ATP-binding protein (295 aa).

Residues 39–44 and lysine 68 each bind ATP; that span reads GIGKST. Mg(2+) is bound at residue serine 43. 2 residues coordinate [4Fe-4S] cluster: cysteine 124 and cysteine 158. Residue 209-210 coordinates ATP; that stretch reads NR.

It belongs to the NifH/BchL/ChlL family. Homodimer. Protochlorophyllide reductase is composed of three subunits; ChlL, ChlN and ChlB. Requires [4Fe-4S] cluster as cofactor.

It carries out the reaction chlorophyllide a + oxidized 2[4Fe-4S]-[ferredoxin] + 2 ADP + 2 phosphate = protochlorophyllide a + reduced 2[4Fe-4S]-[ferredoxin] + 2 ATP + 2 H2O. It participates in porphyrin-containing compound metabolism; chlorophyll biosynthesis (light-independent). Its function is as follows. Component of the dark-operative protochlorophyllide reductase (DPOR) that uses Mg-ATP and reduced ferredoxin to reduce ring D of protochlorophyllide (Pchlide) to form chlorophyllide a (Chlide). This reaction is light-independent. The L component serves as a unique electron donor to the NB-component of the complex, and binds Mg-ATP. This chain is Light-independent protochlorophyllide reductase iron-sulfur ATP-binding protein, found in Prochlorococcus marinus (strain MIT 9515).